The primary structure comprises 272 residues: Ethanolamine ammonia-lyase small subunit (272 aa).

Residues Val-161, Glu-182, and Cys-211 each contribute to the adenosylcob(III)alamin site.

The protein belongs to the EutC family. As to quaternary structure, the basic unit is a heterodimer which dimerizes to form tetramers. The heterotetramers trimerize; 6 large subunits form a core ring with 6 small subunits projecting outwards. The cofactor is adenosylcob(III)alamin.

Its subcellular location is the bacterial microcompartment. The catalysed reaction is ethanolamine = acetaldehyde + NH4(+). The protein operates within amine and polyamine degradation; ethanolamine degradation. Functionally, catalyzes the deamination of various vicinal amino-alcohols to oxo compounds. Allows this organism to utilize ethanolamine as the sole source of nitrogen and carbon in the presence of external vitamin B12. The polypeptide is Ethanolamine ammonia-lyase small subunit (Pseudomonas putida (strain GB-1)).